Reading from the N-terminus, the 612-residue chain is Threonine--tRNA ligase (612 aa).

Positions 218-509 (DHRKLGVELG…LSEHFGGNFP (292 aa)) are catalytic. Zn(2+) contacts are provided by Cys-310, His-361, and His-486.

The protein belongs to the class-II aminoacyl-tRNA synthetase family. In terms of assembly, homodimer. Zn(2+) serves as cofactor.

The protein localises to the cytoplasm. The catalysed reaction is tRNA(Thr) + L-threonine + ATP = L-threonyl-tRNA(Thr) + AMP + diphosphate + H(+). Its function is as follows. Catalyzes the attachment of threonine to tRNA(Thr) in a two-step reaction: L-threonine is first activated by ATP to form Thr-AMP and then transferred to the acceptor end of tRNA(Thr). Also edits incorrectly charged L-seryl-tRNA(Thr). The sequence is that of Threonine--tRNA ligase from Helicobacter pylori (strain ATCC 700392 / 26695) (Campylobacter pylori).